The following is a 491-amino-acid chain: Allene oxide synthase 3 (491 aa).

The heme b site is built by Lys-104, His-135, and Lys-139. Positions 296 and 302 each coordinate (13S)-hydroperoxy-(9Z,11E)-octadecadienoate. Position 296 (Asn-296) interacts with (13S)-hydroperoxy-(9Z,11E,15Z)-octadecatrienoate. Heme b-binding residues include Lys-442 and Cys-444.

It belongs to the cytochrome P450 family. Heme b serves as cofactor. In terms of tissue distribution, expressed in roots. Not detected in aerial tissues, including cotyledons, leaves, stems and flower buds.

The enzyme catalyses (13S)-hydroperoxy-(9Z,11E,15Z)-octadecatrienoate = (9Z,13S,15Z)-12,13-epoxyoctadeca-9,11,15-trienoate + H2O. The catalysed reaction is (13S)-hydroperoxy-(9Z,11E)-octadecadienoate = (9Z,13S)-12,13-epoxyoctadeca-9,11-dienoate + H2O. It carries out the reaction (9Z,13S,15Z)-12,13-epoxyoctadeca-9,11,15-trienoate = (9S,13S,15Z)-12-oxophyto-10,15-dienoate. In terms of biological role, cytochrome P450 metabolizing both 13- and 9-hydroperoxides of linoleic and linolenic acids, but with a marked preference for 9-hydroperoxy fatty acids. Catalyzes not only the synthesis of allene oxide, but also its hydrolysis and cyclization. The first step is the synthesis of (12Z)-9,10-epoxyoctadeca-10,12-dienoic acid (9,10-EOD) and the final products are (9R)-alpha-ketol and the racemic cis-10-oxo-11-phytoenoic acid. The cyclase activity possesses regiospecificity and (9Z)-12,13-epoxyoctadeca-9,11-dienoic acid (12,13-EOD) is significantly less efficient as a substrate for cyclopentenone production than 9,10-EOD. Has no hydroperoxide lyase activity. May play a defensive role against soil-borne pests that affect roots or juvenile tissues as they emerge from the germinating seed. The chain is Allene oxide synthase 3 from Solanum lycopersicum (Tomato).